Consider the following 248-residue polypeptide: 14-3-3 protein sigma (248 aa).

A phosphoserine mark is found at Ser-5, Ser-74, and Ser-248.

It belongs to the 14-3-3 family. In terms of assembly, homodimer. Interacts with KRT17 and SAMSN1. Found in a complex with XPO7, EIF4A1, ARHGAP1, VPS26A, VPS29 and VPS35. Interacts with GAB2. Interacts with SRPK2. Interacts with COPS6. Interacts with COP1; this interaction leads to proteasomal degradation. Interacts with the 'Thr-369' phosphorylated form of DAPK2. Interacts with PI4KB. Interacts with SLITRK1. Interacts with LRRK2; this interaction is dependent on LRRK2 phosphorylation. Interacts with PKP3 (via N-terminus); the interaction maintains the cytoplasmic pool of PKP3, facilitates PKP3 exchange at desmosomes and restricts PKP3 localization to existing desmosome cell junctions. Interacts with LCP2. In terms of processing, ubiquitinated. Ubiquitination by RFFL induces proteasomal degradation and indirectly regulates p53/TP53 activation. Expressed in dorsal skin (at protein level). Expressed in the basal layer of skin epithelium and in outer root sheath of hair follicle.

The protein localises to the cytoplasm. Its subcellular location is the nucleus. It localises to the secreted. Its function is as follows. Adapter protein implicated in the regulation of a large spectrum of both general and specialized signaling pathways. Binds to a large number of partners, usually by recognition of a phosphoserine or phosphothreonine motif. Binding generally results in the modulation of the activity of the binding partner. Promotes cytosolic retention of GBP1 GTPase by binding to phosphorylated GBP1, thereby inhibiting the innate immune response. Also acts as a TP53/p53-regulated inhibitor of G2/M progression. When bound to KRT17, regulates protein synthesis and epithelial cell growth by stimulating Akt/mTOR pathway. Acts to maintain desmosome cell junction adhesion in epithelial cells via interacting with and sequestering PKP3 to the cytoplasm, thereby restricting its translocation to existing desmosome structures and therefore maintaining desmosome protein homeostasis. Also acts to facilitate PKP3 exchange at desmosome plaques, thereby maintaining keratinocyte intercellular adhesion. May also regulate MDM2 autoubiquitination and degradation and thereby activate p53/TP53. In Mus musculus (Mouse), this protein is 14-3-3 protein sigma (Sfn).